A 150-amino-acid chain; its full sequence is UPF0178 protein DMR_20710 (150 aa).

It belongs to the UPF0178 family.

In Solidesulfovibrio magneticus (strain ATCC 700980 / DSM 13731 / RS-1) (Desulfovibrio magneticus), this protein is UPF0178 protein DMR_20710.